A 491-amino-acid chain; its full sequence is Ketol-acid reductoisomerase (NADP(+)) (491 aa).

A KARI N-terminal Rossmann domain is found at 15 to 208 (AQLGKCRFMA…GGHRAGVLES (194 aa)). NADP(+)-binding positions include 45 to 48 (CGAQ), arginine 68, arginine 76, serine 78, and 108 to 110 (DKQ). Histidine 132 is an active-site residue. Position 158 (glycine 158) interacts with NADP(+). KARI C-terminal knotted domains follow at residues 209–344 (SFVA…TASQ) and 345–484 (FDGK…MKDM). Aspartate 217, glutamate 221, glutamate 389, and glutamate 393 together coordinate Mg(2+). Residue serine 414 coordinates substrate.

Belongs to the ketol-acid reductoisomerase family. The cofactor is Mg(2+).

It carries out the reaction (2R)-2,3-dihydroxy-3-methylbutanoate + NADP(+) = (2S)-2-acetolactate + NADPH + H(+). It catalyses the reaction (2R,3R)-2,3-dihydroxy-3-methylpentanoate + NADP(+) = (S)-2-ethyl-2-hydroxy-3-oxobutanoate + NADPH + H(+). Its pathway is amino-acid biosynthesis; L-isoleucine biosynthesis; L-isoleucine from 2-oxobutanoate: step 2/4. It participates in amino-acid biosynthesis; L-valine biosynthesis; L-valine from pyruvate: step 2/4. Functionally, involved in the biosynthesis of branched-chain amino acids (BCAA). Catalyzes an alkyl-migration followed by a ketol-acid reduction of (S)-2-acetolactate (S2AL) to yield (R)-2,3-dihydroxy-isovalerate. In the isomerase reaction, S2AL is rearranged via a Mg-dependent methyl migration to produce 3-hydroxy-3-methyl-2-ketobutyrate (HMKB). In the reductase reaction, this 2-ketoacid undergoes a metal-dependent reduction by NADPH to yield (R)-2,3-dihydroxy-isovalerate. The chain is Ketol-acid reductoisomerase (NADP(+)) from Enterobacter sp. (strain 638).